A 251-amino-acid chain; its full sequence is Imidazole glycerol phosphate synthase subunit HisF (251 aa).

Residues aspartate 11 and aspartate 130 contribute to the active site.

Belongs to the HisA/HisF family. In terms of assembly, heterodimer of HisH and HisF.

The protein resides in the cytoplasm. The enzyme catalyses 5-[(5-phospho-1-deoxy-D-ribulos-1-ylimino)methylamino]-1-(5-phospho-beta-D-ribosyl)imidazole-4-carboxamide + L-glutamine = D-erythro-1-(imidazol-4-yl)glycerol 3-phosphate + 5-amino-1-(5-phospho-beta-D-ribosyl)imidazole-4-carboxamide + L-glutamate + H(+). It functions in the pathway amino-acid biosynthesis; L-histidine biosynthesis; L-histidine from 5-phospho-alpha-D-ribose 1-diphosphate: step 5/9. Functionally, IGPS catalyzes the conversion of PRFAR and glutamine to IGP, AICAR and glutamate. The HisF subunit catalyzes the cyclization activity that produces IGP and AICAR from PRFAR using the ammonia provided by the HisH subunit. In Listeria welshimeri serovar 6b (strain ATCC 35897 / DSM 20650 / CCUG 15529 / CIP 8149 / NCTC 11857 / SLCC 5334 / V8), this protein is Imidazole glycerol phosphate synthase subunit HisF.